The following is a 1015-amino-acid chain: Translation initiation factor IF-2 (1015 aa).

4 disordered regions span residues 124 to 144, 159 to 179, 196 to 230, and 250 to 386; these read EKEP…EKKV, EVTV…PKPV, KKEE…KEEE, and IDLA…VSEE. Basic and acidic residues-rich tracts occupy residues 196–217 and 265–315; these read KKEE…EKPV and SKEE…DPNG. The region spanning 514 to 684 is the tr-type G domain; that stretch reads HRAPIVTVMG…LLEAEMLDLK (171 aa). Residues 523–530 form a G1 region; the sequence is GHVDHGKT. 523–530 provides a ligand contact to GTP; it reads GHVDHGKT. The G2 stretch occupies residues 548 to 552; sequence GITQH. Residues 570–573 are G3; sequence DTPG. GTP-binding positions include 570 to 574 and 624 to 627; these read DTPGH and NKID. The segment at 624–627 is G4; sequence NKID. Residues 660 to 662 form a G5 region; sequence SAK.

The protein belongs to the TRAFAC class translation factor GTPase superfamily. Classic translation factor GTPase family. IF-2 subfamily.

The protein resides in the cytoplasm. In terms of biological role, one of the essential components for the initiation of protein synthesis. Protects formylmethionyl-tRNA from spontaneous hydrolysis and promotes its binding to the 30S ribosomal subunits. Also involved in the hydrolysis of GTP during the formation of the 70S ribosomal complex. This Bacteroides fragilis (strain ATCC 25285 / DSM 2151 / CCUG 4856 / JCM 11019 / LMG 10263 / NCTC 9343 / Onslow / VPI 2553 / EN-2) protein is Translation initiation factor IF-2.